The chain runs to 98 residues: UPF0251 protein VC0395_0048/VC395_A0084 (98 aa).

It belongs to the UPF0251 family.

This chain is UPF0251 protein VC0395_0048/VC395_A0084, found in Vibrio cholerae serotype O1 (strain ATCC 39541 / Classical Ogawa 395 / O395).